Reading from the N-terminus, the 419-residue chain is Transcription termination factor Rho (419 aa).

A Rho RNA-BD domain is found at 48–123 (EISGDGVLEI…LKVDSINFDR (76 aa)). RNA-binding stretches follow at residues 61-66 (GFGFLR), 78-80 (DIY), and 108-110 (ERY). ATP contacts are provided by residues 169–174 (GKGQRG), 181–186 (KAGKTI), and arginine 212. The tract at residues 284-288 (VLTGG) is RNA-binding 2.

This sequence belongs to the Rho family. In terms of assembly, homohexamer. The homohexamer assembles into an open ring structure.

Its function is as follows. Facilitates transcription termination by a mechanism that involves Rho binding to the nascent RNA, activation of Rho's RNA-dependent ATPase activity, and release of the mRNA from the DNA template. The polypeptide is Transcription termination factor Rho (Pseudomonas aeruginosa (strain ATCC 15692 / DSM 22644 / CIP 104116 / JCM 14847 / LMG 12228 / 1C / PRS 101 / PAO1)).